Consider the following 178-residue polypeptide: Cytidylate kinase (178 aa).

7 to 15 (GLPGTGTTT) serves as a coordination point for ATP.

This sequence belongs to the cytidylate kinase family. Type 2 subfamily.

It is found in the cytoplasm. It catalyses the reaction CMP + ATP = CDP + ADP. The catalysed reaction is dCMP + ATP = dCDP + ADP. The polypeptide is Cytidylate kinase (Methanococcus maripaludis (strain C5 / ATCC BAA-1333)).